We begin with the raw amino-acid sequence, 391 residues long: Dual-specificity RNA methyltransferase RlmN (391 aa).

Catalysis depends on Glu-112, which acts as the Proton acceptor. The 251-residue stretch at 118-368 folds into the Radical SAM core domain; the sequence is ESDRGTLCIS…VRTPRGRDIL (251 aa). The cysteines at positions 125 and 371 are disulfide-linked. [4Fe-4S] cluster contacts are provided by Cys-132, Cys-136, and Cys-139. S-adenosyl-L-methionine contacts are provided by residues 197–198, Ser-229, 251–253, and Asn-328; these read GE and SLH. The active-site S-methylcysteine intermediate is Cys-371.

Belongs to the radical SAM superfamily. RlmN family. The cofactor is [4Fe-4S] cluster.

It localises to the cytoplasm. It carries out the reaction adenosine(2503) in 23S rRNA + 2 reduced [2Fe-2S]-[ferredoxin] + 2 S-adenosyl-L-methionine = 2-methyladenosine(2503) in 23S rRNA + 5'-deoxyadenosine + L-methionine + 2 oxidized [2Fe-2S]-[ferredoxin] + S-adenosyl-L-homocysteine. It catalyses the reaction adenosine(37) in tRNA + 2 reduced [2Fe-2S]-[ferredoxin] + 2 S-adenosyl-L-methionine = 2-methyladenosine(37) in tRNA + 5'-deoxyadenosine + L-methionine + 2 oxidized [2Fe-2S]-[ferredoxin] + S-adenosyl-L-homocysteine. Its function is as follows. Specifically methylates position 2 of adenine 2503 in 23S rRNA and position 2 of adenine 37 in tRNAs. m2A2503 modification seems to play a crucial role in the proofreading step occurring at the peptidyl transferase center and thus would serve to optimize ribosomal fidelity. The chain is Dual-specificity RNA methyltransferase RlmN from Beijerinckia indica subsp. indica (strain ATCC 9039 / DSM 1715 / NCIMB 8712).